A 432-amino-acid polypeptide reads, in one-letter code: Enolase (432 aa).

A (2R)-2-phosphoglycerate-binding site is contributed by Q163. Catalysis depends on E205, which acts as the Proton donor. D242, E285, and D312 together coordinate Mg(2+). K337, R366, S367, and K388 together coordinate (2R)-2-phosphoglycerate. K337 (proton acceptor) is an active-site residue.

This sequence belongs to the enolase family. Mg(2+) serves as cofactor.

It localises to the cytoplasm. The protein localises to the secreted. It is found in the cell surface. It catalyses the reaction (2R)-2-phosphoglycerate = phosphoenolpyruvate + H2O. It functions in the pathway carbohydrate degradation; glycolysis; pyruvate from D-glyceraldehyde 3-phosphate: step 4/5. Functionally, catalyzes the reversible conversion of 2-phosphoglycerate (2-PG) into phosphoenolpyruvate (PEP). It is essential for the degradation of carbohydrates via glycolysis. The chain is Enolase from Desulfovibrio desulfuricans (strain ATCC 27774 / DSM 6949 / MB).